The primary structure comprises 107 residues: Large ribosomal subunit protein P2 (107 aa).

A compositionally biased stretch (low complexity) spans 63-83; sequence SSVPSGGSAPAAAAPSGGAAP. The tract at residues 63 to 107 is disordered; sequence SSVPSGGSAPAAAAPSGGAAPKAEEKKKEEPKEESDDDMGFGLFD. Positions 84–93 are enriched in basic and acidic residues; the sequence is KAEEKKKEEP.

Belongs to the eukaryotic ribosomal protein P1/P2 family. In terms of assembly, P1 and P2 exist as dimers at the large ribosomal subunit. In terms of processing, phosphorylated.

In terms of biological role, plays an important role in the elongation step of protein synthesis. This is Large ribosomal subunit protein P2 from Caenorhabditis elegans.